A 299-amino-acid polypeptide reads, in one-letter code: Cuticle collagen 34 (299 aa).

The interval 105–282 (PGPAGTPGKP…GSPGERGICP (178 aa)) is disordered. The span at 129–162 (PGRPPQQPCEPITPPPCKPCPQGPPGPPGPPGPP) shows a compositional bias: pro residues. A compositionally biased stretch (low complexity) spans 164 to 181 (DSGEPGSPGLPGQDAAPG). 2 stretches are compositionally biased toward pro residues: residues 182-195 (EPGPKGPPGPPGAP) and 215-233 (PGEPGPPGEAGPQGPPGSP). The interval 216-278 (GEPGPPGEAG…AGPPGSPGER (63 aa)) is triple-helical region. Low complexity predominate over residues 251-263 (NGPDGQPGADGNP). The span at 265 to 274 (APGPAGPPGS) shows a compositional bias: pro residues.

Belongs to the cuticular collagen family. In terms of assembly, collagen polypeptide chains are complexed within the cuticle by disulfide bonds and other types of covalent cross-links.

Its function is as follows. Nematode cuticles are composed largely of collagen-like proteins. The cuticle functions both as an exoskeleton and as a barrier to protect the worm from its environment. The sequence is that of Cuticle collagen 34 (col-34) from Caenorhabditis elegans.